Here is an 890-residue protein sequence, read N- to C-terminus: Alanine--tRNA ligase (890 aa).

His569, His573, Cys671, and His675 together coordinate Zn(2+).

This sequence belongs to the class-II aminoacyl-tRNA synthetase family. The cofactor is Zn(2+).

Its subcellular location is the cytoplasm. It catalyses the reaction tRNA(Ala) + L-alanine + ATP = L-alanyl-tRNA(Ala) + AMP + diphosphate. In terms of biological role, catalyzes the attachment of alanine to tRNA(Ala) in a two-step reaction: alanine is first activated by ATP to form Ala-AMP and then transferred to the acceptor end of tRNA(Ala). Also edits incorrectly charged Ser-tRNA(Ala) and Gly-tRNA(Ala) via its editing domain. The polypeptide is Alanine--tRNA ligase (Synechococcus sp. (strain CC9902)).